A 287-amino-acid polypeptide reads, in one-letter code: GTPase Era (287 aa).

The region spanning 6-178 is the Era-type G domain; sequence FSGTSVIIGK…IQNKLKIVPK (173 aa). Residues 14–21 are G1; that stretch reads GKPNVGKS. A GTP-binding site is contributed by 14-21; it reads GKPNVGKS. A G2 region spans residues 40–44; that stretch reads HTTQS. The tract at residues 62-65 is G3; it reads DTPG. GTP is bound by residues 62–66 and 124–127; these read DTPGI and NKID. A G4 region spans residues 124-127; the sequence is NKID. The tract at residues 154-156 is G5; the sequence is ISG. The KH type-2 domain occupies 207–282; the sequence is LGDELPYSIQ…SIYLSLKVIK (76 aa).

Belongs to the TRAFAC class TrmE-Era-EngA-EngB-Septin-like GTPase superfamily. Era GTPase family. In terms of assembly, monomer.

The protein resides in the cytoplasm. The protein localises to the cell membrane. Functionally, an essential GTPase that binds both GDP and GTP, with rapid nucleotide exchange. Plays a role in 16S rRNA processing and 30S ribosomal subunit biogenesis and possibly also in cell cycle regulation and energy metabolism. This chain is GTPase Era, found in Buchnera aphidicola subsp. Baizongia pistaciae (strain Bp).